Reading from the N-terminus, the 300-residue chain is N-acetylmuramic acid 6-phosphate etherase (300 aa).

The 164-residue stretch at 57–220 folds into the SIS domain; sequence IAVAFQSGGR…TTGAMIRTGK (164 aa). The active-site Proton donor is E85. E116 is a catalytic residue.

The protein belongs to the GCKR-like family. MurNAc-6-P etherase subfamily. Homodimer.

It carries out the reaction N-acetyl-D-muramate 6-phosphate + H2O = N-acetyl-D-glucosamine 6-phosphate + (R)-lactate. Its pathway is amino-sugar metabolism; 1,6-anhydro-N-acetylmuramate degradation. It functions in the pathway amino-sugar metabolism; N-acetylmuramate degradation. It participates in cell wall biogenesis; peptidoglycan recycling. Specifically catalyzes the cleavage of the D-lactyl ether substituent of MurNAc 6-phosphate, producing GlcNAc 6-phosphate and D-lactate. Together with AnmK, is also required for the utilization of anhydro-N-acetylmuramic acid (anhMurNAc) either imported from the medium or derived from its own cell wall murein, and thus plays a role in cell wall recycling. The chain is N-acetylmuramic acid 6-phosphate etherase from Aliivibrio fischeri (strain ATCC 700601 / ES114) (Vibrio fischeri).